We begin with the raw amino-acid sequence, 317 residues long: MSFSARSRRQRLQLEEAYQREMIFKMHTLDLVREGVNKRSPAFVRAFTSAKEASLDLDRYMQAHSRVGRVEQNARALAQRVEAQAAVGEILDRHRRFLHPDFIDNFDSREDSIVEREERLGDVLSDINCDGGGGEVGDPQEWLGHEDEALLMRWMLEEAPRVSTRIAADPHSPRSTCPAPRKAPEDARCGARKPGEVNNYTPSAQPRSQETTVDHLASPDEGTRLGDRTRDLEHHSTAPMRTHPNVLASERRRLGVVHQREKSSESQESATRSKAIVGQEDQKWLGGIPPLSDEELQVDMGIPTMNGPIYPDYHRTA.

Residues 166-291 (IAADPHSPRS…QKWLGGIPPL (126 aa)) form a disordered region. Residues 182–195 (KAPEDARCGARKPG) are compositionally biased toward basic and acidic residues. Residues 198-211 (NNYTPSAQPRSQET) are compositionally biased toward polar residues. Composition is skewed to basic and acidic residues over residues 217–236 (ASPDEGTRLGDRTRDLEHHS) and 249–265 (SERRRLGVVHQREKSSE).

Belongs to the alphaherpesvirinae HHV-1 UL14 protein family.

It localises to the virion tegument. The protein resides in the host cytoplasm. The protein localises to the host nucleus. Contributes to the nuclear transport of the viral transcriptional activator VP16 during the early phase of infection. Therefore, participates indirectly in the regulation of the immediate-early gene expression. Additionally, seems to be important for efficient nuclear targeting of capsids. This is Tegument protein UL14 homolog from Equus caballus (Horse).